Reading from the N-terminus, the 452-residue chain is UPF0210 protein Hore_14430 (452 aa).

The protein belongs to the UPF0210 family. As to quaternary structure, homodimer.

This Halothermothrix orenii (strain H 168 / OCM 544 / DSM 9562) protein is UPF0210 protein Hore_14430.